The chain runs to 169 residues: MGASQSAEQEARPEVVRIDRNEIPEEYKTVGVSSDVVSRVNATRVAGNDGESDRLRQELAREREEKARLREDMAKLSQLQQRKTAGISAAPVSISGNDLEERKKIFDDTVERVQKQFFAYHRENVCQDNENEIVRCLQENPGRVLKCAPLTEAFEKCVGEFRQQVLKGN.

The N-myristoyl glycine moiety is linked to residue glycine 2. Residues 123 to 165 (ENVCQDNENEIVRCLQENPGRVLKCAPLTEAFEKCVGEFRQQV) form the CHCH domain. 2 consecutive short sequence motifs (cx9C motif) follow at residues 126–136 (CQDNENEIVRC) and 147–157 (CAPLTEAFEKC). Disulfide bonds link cysteine 126/cysteine 157 and cysteine 136/cysteine 147.

The protein belongs to the MICOS complex subunit Mic19 family. Metazoan Mic19 subfamily. As to quaternary structure, component of the mitochondrial contact site and cristae organizing system (MICOS) complex.

The protein localises to the mitochondrion inner membrane. Functionally, plays a role in maintaining mitochondrial morphology. May act as a component of the MICOS complex, a large protein complex of the mitochondria. The sequence is that of MICOS complex subunit MIC19 from Caenorhabditis elegans.